Here is a 406-residue protein sequence, read N- to C-terminus: Cyclin-dependent kinase 4 homolog (406 aa).

The Protein kinase domain occupies 102 to 388; sequence TFLFQALGKG…ARGALSHPFL (287 aa). ATP is bound by residues 108 to 116 and Lys131; that span reads LGKGAYGNV. The active-site Proton acceptor is Asp233. Mg(2+) contacts are provided by Asn238 and Asp251.

Belongs to the protein kinase superfamily. CMGC Ser/Thr protein kinase family. CDC2/CDKX subfamily. In terms of assembly, interacts with cyd-1; the interaction is likely involved in regulating cdk-4 activity. Mg(2+) is required as a cofactor.

It carries out the reaction L-seryl-[protein] + ATP = O-phospho-L-seryl-[protein] + ADP + H(+). The catalysed reaction is L-threonyl-[protein] + ATP = O-phospho-L-threonyl-[protein] + ADP + H(+). Functionally, serine/threonine-protein kinase which, in association with cyclin D-like protein cyd-1, is required for the progression through the G1 phase of the cell cycle during postembryonic development by phosphorylating and inhibiting lin-35 and fzr-1. In complex with cyd-1, involved in sex determination during gonadogenesis by regulating the asymmetric division of the somatic gonadal precursor cell (SGP). The chain is Cyclin-dependent kinase 4 homolog from Caenorhabditis elegans.